A 236-amino-acid polypeptide reads, in one-letter code: Biosynthetic peptidoglycan transglycosylase (236 aa).

The chain crosses the membrane as a helical span at residues 12–31 (ALLWFVAGSIVLVLVFRWVP).

It belongs to the glycosyltransferase 51 family.

The protein localises to the cell inner membrane. The catalysed reaction is [GlcNAc-(1-&gt;4)-Mur2Ac(oyl-L-Ala-gamma-D-Glu-L-Lys-D-Ala-D-Ala)](n)-di-trans,octa-cis-undecaprenyl diphosphate + beta-D-GlcNAc-(1-&gt;4)-Mur2Ac(oyl-L-Ala-gamma-D-Glu-L-Lys-D-Ala-D-Ala)-di-trans,octa-cis-undecaprenyl diphosphate = [GlcNAc-(1-&gt;4)-Mur2Ac(oyl-L-Ala-gamma-D-Glu-L-Lys-D-Ala-D-Ala)](n+1)-di-trans,octa-cis-undecaprenyl diphosphate + di-trans,octa-cis-undecaprenyl diphosphate + H(+). The protein operates within cell wall biogenesis; peptidoglycan biosynthesis. Its function is as follows. Peptidoglycan polymerase that catalyzes glycan chain elongation from lipid-linked precursors. This chain is Biosynthetic peptidoglycan transglycosylase, found in Pseudomonas putida (strain ATCC 47054 / DSM 6125 / CFBP 8728 / NCIMB 11950 / KT2440).